Reading from the N-terminus, the 366-residue chain is uncharacterized protein (366 aa).

In terms of domain architecture, PINc spans 169–280; it reads ILDTSVIIDG…LNKVCELQKV (112 aa). Residue Asp250 participates in Mg(2+) binding. A TRAM domain is found at 295-356; it reads VVLPGEEMNV…LQTAAGRMIF (62 aa).

It belongs to the ycf81 family. This sequence in the central section; belongs to the PINc/VapC protein family. It depends on Mg(2+) as a cofactor.

In terms of biological role, an RNase. This is an uncharacterized protein from Bacillus subtilis (strain 168).